The following is a 188-amino-acid chain: ADP-ribosylation factor J (188 aa).

Residues 34-40, 75-79, and 134-137 each bind GTP; these read DGAGKST, DVGGQ, and NKQD.

This sequence belongs to the small GTPase superfamily. Arf family.

The protein localises to the golgi apparatus. GTP-binding protein that may be involved in protein trafficking. May modulate vesicle budding and uncoating within the Golgi apparatus. In Dictyostelium discoideum (Social amoeba), this protein is ADP-ribosylation factor J (arrJ).